A 387-amino-acid chain; its full sequence is Type 2 DNA topoisomerase 6 subunit A (387 aa).

Residues 12 to 160 (EARKKALAVF…MLILSKEKGK (149 aa)) enclose the Topo IIA-type catalytic domain. Catalysis depends on Y106, which acts as the O-(5'-phospho-DNA)-tyrosine intermediate. Residues E207 and D259 each coordinate Mg(2+).

This sequence belongs to the TOP6A family. In terms of assembly, homodimer. Heterotetramer of two Top6A and two Top6B chains. Requires Mg(2+) as cofactor.

It catalyses the reaction ATP-dependent breakage, passage and rejoining of double-stranded DNA.. In terms of biological role, relaxes both positive and negative superturns and exhibits a strong decatenase activity. This is Type 2 DNA topoisomerase 6 subunit A from Hyperthermus butylicus (strain DSM 5456 / JCM 9403 / PLM1-5).